Reading from the N-terminus, the 873-residue chain is Chitin synthase F (873 aa).

The tract at residues M1–P105 is disordered. Polar residues-rich tracts occupy residues S33–L46, I58–S72, and E80–G98. N506 carries an N-linked (GlcNAc...) asparagine glycan. A run of 7 helical transmembrane segments spans residues L532–A554, I588–A608, I621–L641, G672–Y692, S702–C722, L802–V822, and V841–L861.

This sequence belongs to the chitin synthase family. Class III subfamily.

It localises to the cell membrane. The catalysed reaction is [(1-&gt;4)-N-acetyl-beta-D-glucosaminyl](n) + UDP-N-acetyl-alpha-D-glucosamine = [(1-&gt;4)-N-acetyl-beta-D-glucosaminyl](n+1) + UDP + H(+). Functionally, polymerizes chitin, a structural polymer of the cell wall and septum, by transferring the sugar moiety of UDP-GlcNAc to the non-reducing end of the growing chitin polymer. Plays an important role in septal growth or maintenance. Mediates colony spore formation. The chain is Chitin synthase F from Aspergillus niger (strain ATCC MYA-4892 / CBS 513.88 / FGSC A1513).